We begin with the raw amino-acid sequence, 424 residues long: GTPase Obg (424 aa).

The region spanning 1–158 is the Obg domain; that stretch reads MFIDTAKIFV…RWIKLELKLL (158 aa). One can recognise an OBG-type G domain in the interval 159 to 331; it reads ADVGLIGFPN…LMKEAARLLS (173 aa). GTP-binding positions include 165 to 172, 190 to 194, 212 to 215, 282 to 285, and 312 to 314; these read GFPNVGKS, FTTLK, DIPG, NKSD, and SAA. Residues Ser-172 and Thr-192 each contribute to the Mg(2+) site. The 80-residue stretch at 345–424 folds into the OCT domain; it reads RFIEEEKRFT…LNDFEFDFLL (80 aa).

This sequence belongs to the TRAFAC class OBG-HflX-like GTPase superfamily. OBG GTPase family. As to quaternary structure, monomer. Mg(2+) serves as cofactor.

Its subcellular location is the cytoplasm. Functionally, an essential GTPase which binds GTP, GDP and possibly (p)ppGpp with moderate affinity, with high nucleotide exchange rates and a fairly low GTP hydrolysis rate. Plays a role in control of the cell cycle, stress response, ribosome biogenesis and in those bacteria that undergo differentiation, in morphogenesis control. This chain is GTPase Obg, found in Clostridium botulinum (strain ATCC 19397 / Type A).